The primary structure comprises 172 residues: Endoribonuclease YbeY (172 aa).

3 residues coordinate Zn(2+): His124, His128, and His134.

It belongs to the endoribonuclease YbeY family. Zn(2+) serves as cofactor.

The protein resides in the cytoplasm. Single strand-specific metallo-endoribonuclease involved in late-stage 70S ribosome quality control and in maturation of the 3' terminus of the 16S rRNA. This is Endoribonuclease YbeY from Rhodopseudomonas palustris (strain BisA53).